Reading from the N-terminus, the 377-residue chain is Glutamate 5-kinase (377 aa).

Position 22 (K22) interacts with ATP. Residues S62, D149, and N161 each contribute to the substrate site. Residues 181–182 (TD) and 223–229 (TGGMVTK) contribute to the ATP site. Positions 285–363 (RGAIVVDAGA…AQLKRFLGPQ (79 aa)) constitute a PUA domain.

This sequence belongs to the glutamate 5-kinase family.

It localises to the cytoplasm. The catalysed reaction is L-glutamate + ATP = L-glutamyl 5-phosphate + ADP. The protein operates within amino-acid biosynthesis; L-proline biosynthesis; L-glutamate 5-semialdehyde from L-glutamate: step 1/2. Functionally, catalyzes the transfer of a phosphate group to glutamate to form L-glutamate 5-phosphate. In Bifidobacterium longum subsp. infantis (strain ATCC 15697 / DSM 20088 / JCM 1222 / NCTC 11817 / S12), this protein is Glutamate 5-kinase.